Consider the following 323-residue polypeptide: Elongation factor P--(R)-beta-lysine ligase (323 aa).

74–76 is a binding site for substrate; the sequence is SPE. ATP-binding positions include 98–100 and Asn107; that span reads RNE. Residue Tyr116 coordinates substrate. 242-243 serves as a coordination point for ATP; the sequence is EL. Residue Glu249 participates in substrate binding. Gly298 provides a ligand contact to ATP.

Belongs to the class-II aminoacyl-tRNA synthetase family. EpmA subfamily. As to quaternary structure, homodimer.

The enzyme catalyses D-beta-lysine + L-lysyl-[protein] + ATP = N(6)-((3R)-3,6-diaminohexanoyl)-L-lysyl-[protein] + AMP + diphosphate + H(+). With EpmB is involved in the beta-lysylation step of the post-translational modification of translation elongation factor P (EF-P). Catalyzes the ATP-dependent activation of (R)-beta-lysine produced by EpmB, forming a lysyl-adenylate, from which the beta-lysyl moiety is then transferred to the epsilon-amino group of a conserved specific lysine residue in EF-P. In Photobacterium profundum (strain SS9), this protein is Elongation factor P--(R)-beta-lysine ligase.